The sequence spans 89 residues: Putative regulatory protein Dalk_1931 (89 aa).

This sequence belongs to the RemA family.

This chain is Putative regulatory protein Dalk_1931, found in Desulfatibacillum aliphaticivorans.